Reading from the N-terminus, the 239-residue chain is Pyrroloquinoline-quinone synthase (239 aa).

The protein belongs to the PqqC family.

The enzyme catalyses 6-(2-amino-2-carboxyethyl)-7,8-dioxo-1,2,3,4,7,8-hexahydroquinoline-2,4-dicarboxylate + 3 O2 = pyrroloquinoline quinone + 2 H2O2 + 2 H2O + H(+). The protein operates within cofactor biosynthesis; pyrroloquinoline quinone biosynthesis. In terms of biological role, ring cyclization and eight-electron oxidation of 3a-(2-amino-2-carboxyethyl)-4,5-dioxo-4,5,6,7,8,9-hexahydroquinoline-7,9-dicarboxylic-acid to PQQ. This chain is Pyrroloquinoline-quinone synthase, found in Gluconobacter oxydans (strain 621H) (Gluconobacter suboxydans).